A 405-amino-acid chain; its full sequence is Acetate kinase (405 aa).

Asn7 is a binding site for Mg(2+). Position 14 (Lys14) interacts with ATP. Arg90 is a binding site for substrate. Asp147 functions as the Proton donor/acceptor in the catalytic mechanism. Residues 207–211 (HLGNG), 282–284 (DMR), and 330–334 (GVGEN) each bind ATP. Glu383 is a Mg(2+) binding site.

It belongs to the acetokinase family. In terms of assembly, homodimer. The cofactor is Mg(2+). Requires Mn(2+) as cofactor.

The protein localises to the cytoplasm. The catalysed reaction is acetate + ATP = acetyl phosphate + ADP. It functions in the pathway metabolic intermediate biosynthesis; acetyl-CoA biosynthesis; acetyl-CoA from acetate: step 1/2. Functionally, catalyzes the formation of acetyl phosphate from acetate and ATP. Can also catalyze the reverse reaction. This chain is Acetate kinase, found in Pseudothermotoga lettingae (strain ATCC BAA-301 / DSM 14385 / NBRC 107922 / TMO) (Thermotoga lettingae).